Consider the following 260-residue polypeptide: Phosphatidate cytidylyltransferase (260 aa).

7 helical membrane passes run 9-29 (IIAL…LMIF), 46-66 (MIKF…IIML), 70-90 (AGPW…FIVL), 102-122 (FMDA…FMFF), 130-150 (LHYI…AYLF), 172-192 (FIGG…FVDF), and 196-216 (VWIL…GDLV).

The protein belongs to the CDS family.

It is found in the cell membrane. It catalyses the reaction a 1,2-diacyl-sn-glycero-3-phosphate + CTP + H(+) = a CDP-1,2-diacyl-sn-glycerol + diphosphate. The protein operates within phospholipid metabolism; CDP-diacylglycerol biosynthesis; CDP-diacylglycerol from sn-glycerol 3-phosphate: step 3/3. This Staphylococcus aureus (strain COL) protein is Phosphatidate cytidylyltransferase (cdsA).